Consider the following 359-residue polypeptide: Phospho-N-acetylmuramoyl-pentapeptide-transferase (359 aa).

The next 10 membrane-spanning stretches (helical) occupy residues 3–23 (QILI…PVLI), 55–75 (VAIL…GLAL), 84–104 (GLLV…DDLI), 120–140 (TVGI…FGNA), 156–176 (IATV…LVSA), 187–207 (LDGL…LITF), 231–251 (LALV…WNAA), 255–275 (IFMG…LSVT), 280–300 (ILAV…VVQI), and 334–354 (FWLL…GEWL).

This sequence belongs to the glycosyltransferase 4 family. MraY subfamily. Mg(2+) is required as a cofactor.

Its subcellular location is the cell membrane. The enzyme catalyses UDP-N-acetyl-alpha-D-muramoyl-L-alanyl-gamma-D-glutamyl-meso-2,6-diaminopimeloyl-D-alanyl-D-alanine + di-trans,octa-cis-undecaprenyl phosphate = di-trans,octa-cis-undecaprenyl diphospho-N-acetyl-alpha-D-muramoyl-L-alanyl-D-glutamyl-meso-2,6-diaminopimeloyl-D-alanyl-D-alanine + UMP. It functions in the pathway cell wall biogenesis; peptidoglycan biosynthesis. Its function is as follows. Catalyzes the initial step of the lipid cycle reactions in the biosynthesis of the cell wall peptidoglycan: transfers peptidoglycan precursor phospho-MurNAc-pentapeptide from UDP-MurNAc-pentapeptide onto the lipid carrier undecaprenyl phosphate, yielding undecaprenyl-pyrophosphoryl-MurNAc-pentapeptide, known as lipid I. The polypeptide is Phospho-N-acetylmuramoyl-pentapeptide-transferase (Mycobacterium sp. (strain MCS)).